A 369-amino-acid polypeptide reads, in one-letter code: 2-aminoethylphosphonate--pyruvate transaminase (369 aa).

At lysine 193 the chain carries N6-(pyridoxal phosphate)lysine.

Belongs to the class-V pyridoxal-phosphate-dependent aminotransferase family. PhnW subfamily. As to quaternary structure, homodimer. Pyridoxal 5'-phosphate is required as a cofactor.

The enzyme catalyses (2-aminoethyl)phosphonate + pyruvate = phosphonoacetaldehyde + L-alanine. In terms of biological role, involved in phosphonate degradation. This is 2-aminoethylphosphonate--pyruvate transaminase from Burkholderia pseudomallei (strain 668).